Reading from the N-terminus, the 122-residue chain is UPF0382 membrane protein SERP0230 (122 aa).

4 helical membrane passes run 3–23 (VFIILGALNAMMAVGTGAFGA), 46–66 (MYHGLGLLVIGLISGTTSINV), 69–89 (AGWLLFFGIVFFSGSLYFLAL), and 98–118 (ITPIGGVLFIIGWLVLVIATL).

The protein belongs to the UPF0382 family.

The protein resides in the cell membrane. The protein is UPF0382 membrane protein SERP0230 of Staphylococcus epidermidis (strain ATCC 35984 / DSM 28319 / BCRC 17069 / CCUG 31568 / BM 3577 / RP62A).